A 501-amino-acid polypeptide reads, in one-letter code: Glycerol kinase (501 aa).

Threonine 12 contacts ADP. ATP contacts are provided by threonine 12, threonine 13, and serine 14. Threonine 12 serves as a coordination point for sn-glycerol 3-phosphate. Arginine 16 is an ADP binding site. The sn-glycerol 3-phosphate site is built by arginine 82, glutamate 83, tyrosine 135, and aspartate 244. Positions 82, 83, 135, 244, and 245 each coordinate glycerol. Threonine 266, glycine 309, glycine 409, and asparagine 413 together coordinate ADP. ATP-binding residues include threonine 266, glycine 309, and glycine 409.

The protein belongs to the FGGY kinase family.

It catalyses the reaction glycerol + ATP = sn-glycerol 3-phosphate + ADP + H(+). The protein operates within polyol metabolism; glycerol degradation via glycerol kinase pathway; sn-glycerol 3-phosphate from glycerol: step 1/1. With respect to regulation, inhibited by fructose 1,6-bisphosphate (FBP). In terms of biological role, key enzyme in the regulation of glycerol uptake and metabolism. Catalyzes the phosphorylation of glycerol to yield sn-glycerol 3-phosphate. The polypeptide is Glycerol kinase (Coxiella burnetii (strain Dugway 5J108-111)).